Consider the following 211-residue polypeptide: UPF0637 protein ABC2405 (211 aa).

It belongs to the UPF0637 family.

In Shouchella clausii (strain KSM-K16) (Alkalihalobacillus clausii), this protein is UPF0637 protein ABC2405.